Here is a 208-residue protein sequence, read N- to C-terminus: HTLV-1 basic zipper factor (208 aa).

Residues 59 to 93 are disordered; sequence RLRWGPVGEEAPPRGETHRDRQRRAEEKRKRKRER. The span at 69 to 86 shows a compositional bias: basic and acidic residues; sequence APPRGETHRDRQRRAEEK. Short sequence motifs (nuclear localization signal) lie at residues 86 to 91, 115 to 119, and 136 to 140; these read KRKRKR, RRRRA, and RRERK. The span at 125 to 143 shows a compositional bias: basic and acidic residues; the sequence is DRARRKLEEEERRERKWRQ. Residues 125–160 form a disordered region; the sequence is DRARRKLEEEERRERKWRQTEQGAKQRSARKEKMTE.

This sequence belongs to the HTLV-1 HBZ protein family. Interacts with host ATF4; this interaction inhibits viral RNA transcriptional activation by preventing ATF4 binding to Tax-responsive elements. Interacts with host CREB1; this interaction inhibits host CREB1 transcriptional activity. Interacts with host JUN, JUNB and JUND. Interacts with host EP300.

Its subcellular location is the host nucleus. In terms of biological role, contributes to the regulation of viral RNA transcription by interacting with host proteins involved in transcriptional activation such as ATF4, or CREB1, and by inhibiting their activity. Additionally, HBZ suppresses host NF-kappa-B-driven transcription mediated by host RELA as well as transcription of some classical NF-kappa-B target genes, including IL8, IL2RA, IRF4, VCAM1, and VEGFA. The polypeptide is HTLV-1 basic zipper factor (HBZ) (Human T-cell leukemia virus 1 (isolate Melanesia mel5 subtype C) (HTLV-1)).